Reading from the N-terminus, the 183-residue chain is Small ribosomal subunit protein uS4c (183 aa).

Residues Met82–Asn143 form the S4 RNA-binding domain.

Belongs to the universal ribosomal protein uS4 family. As to quaternary structure, part of the 30S ribosomal subunit. Contacts protein S5. The interaction surface between S4 and S5 is involved in control of translational fidelity.

The protein localises to the plastid. It is found in the chloroplast. One of the primary rRNA binding proteins, it binds directly to 16S rRNA where it nucleates assembly of the body of the 30S subunit. Its function is as follows. With S5 and S12 plays an important role in translational accuracy. This chain is Small ribosomal subunit protein uS4c (rps4), found in Schizorhiza neglecta (Lapeirousia neglecta).